Consider the following 288-residue polypeptide: UPF0761 membrane protein HSM_1104 (288 aa).

Helical transmembrane passes span 36–56, 92–112, 127–147, 176–196, 200–220, and 240–260; these read TLAL…FPVF, QMSA…IHSI, PAIF…IVIA, LLSL…YMVV, KVSI…FTLG, and AMAT…AVLL.

It belongs to the UPF0761 family.

The protein resides in the cell inner membrane. The polypeptide is UPF0761 membrane protein HSM_1104 (Histophilus somni (strain 2336) (Haemophilus somnus)).